We begin with the raw amino-acid sequence, 632 residues long: Actin-related protein 8 (632 aa).

Basic and acidic residues predominate over residues 1–30 (MTQAEREQENGKEKEKEREKEKEKEKEQRG). Residues 1-43 (MTQAEREQENGKEKEKEREKEKEKEKEQRGIKRPIAPPVIPEP) are disordered. 288-291 (DVGD) lines the ATP pocket. 2 disordered regions span residues 410–429 (MTSL…DEHY) and 434–494 (QSKQ…GGAE). The span at 434–443 (QSKQDQSSKA) shows a compositional bias: low complexity.

The protein belongs to the actin family. ARP8 subfamily. As to quaternary structure, component of the chromatin remodeling INO80 complex; specifically part of a complex module associated with the DBINO domain of INO80. Exists as monomers and dimers, but the dimer is most probably the biologically relevant form required for stable interactions with histones that exploits the twofold symmetry of the nucleosome core.

It is found in the nucleus. Its subcellular location is the chromosome. In terms of biological role, plays an important role in the functional organization of mitotic chromosomes. Exhibits low basal ATPase activity, and unable to polymerize. Proposed core component of the chromatin remodeling INO80 complex which is involved in transcriptional regulation, DNA replication and probably DNA repair. Required for the recruitment of INO80 (and probably the INO80 complex) to sites of DNA damage Strongly prefer nucleosomes and H3-H4 tetramers over H2A-H2B dimers, suggesting it may act as a nucleosome recognition module within the complex. The sequence is that of Actin-related protein 8 (actr8) from Salmo salar (Atlantic salmon).